A 693-amino-acid polypeptide reads, in one-letter code: ATP-dependent DNA helicase RecG (693 aa).

Positions 48-146 (THLYPIGELL…GDLSTPELQE (99 aa)) are wedge domain. Residues 283–448 (DMALDVPMMR…AYADLDTSVI (166 aa)) form the Helicase ATP-binding domain. 296 to 303 (GDVGSGKT) serves as a coordination point for ATP. A DEAH box motif is present at residues 397-400 (DEQH). The region spanning 482 to 628 (EGRQAYWVCT…GFVIAQKDLE (147 aa)) is the Helicase C-terminal domain.

The protein belongs to the helicase family. RecG subfamily. In terms of assembly, monomer.

The catalysed reaction is Couples ATP hydrolysis with the unwinding of duplex DNA by translocating in the 3'-5' direction.. The enzyme catalyses ATP + H2O = ADP + phosphate + H(+). Functionally, plays a critical role in recombination and DNA repair. Helps process Holliday junction intermediates to mature products by catalyzing branch migration. Has replication fork regression activity, unwinds stalled or blocked replication forks to make a HJ that can be resolved. Has a DNA unwinding activity characteristic of a DNA helicase with 3'-5' polarity. Plays a role in recovery after DNA ADP-ribosylation. This is ATP-dependent DNA helicase RecG from Escherichia coli O127:H6 (strain E2348/69 / EPEC).